The chain runs to 901 residues: Valine--tRNA ligase (901 aa).

The interval 1–37 (MLPGCYTHRLNMSDTQDPPQDESTTDESADALDGEYD) is disordered. Residues 19–35 (PQDESTTDESADALDGE) are compositionally biased toward acidic residues. The short motif at 72–82 (PTVSGNLHMGH) is the 'HIGH' region element. Residues 572–576 (AMSKS) carry the 'KMSKS' region motif. Lys-575 contributes to the ATP binding site.

Belongs to the class-I aminoacyl-tRNA synthetase family. ValS type 2 subfamily.

It localises to the cytoplasm. The enzyme catalyses tRNA(Val) + L-valine + ATP = L-valyl-tRNA(Val) + AMP + diphosphate. Its function is as follows. Catalyzes the attachment of valine to tRNA(Val). As ValRS can inadvertently accommodate and process structurally similar amino acids such as threonine, to avoid such errors, it has a 'posttransfer' editing activity that hydrolyzes mischarged Thr-tRNA(Val) in a tRNA-dependent manner. The sequence is that of Valine--tRNA ligase from Haloarcula marismortui (strain ATCC 43049 / DSM 3752 / JCM 8966 / VKM B-1809) (Halobacterium marismortui).